The primary structure comprises 116 residues: Ribosome-binding factor A (116 aa).

Belongs to the RbfA family. Monomer. Binds 30S ribosomal subunits, but not 50S ribosomal subunits or 70S ribosomes.

Its subcellular location is the cytoplasm. Its function is as follows. One of several proteins that assist in the late maturation steps of the functional core of the 30S ribosomal subunit. Associates with free 30S ribosomal subunits (but not with 30S subunits that are part of 70S ribosomes or polysomes). Required for efficient processing of 16S rRNA. May interact with the 5'-terminal helix region of 16S rRNA. The polypeptide is Ribosome-binding factor A (Streptococcus equi subsp. zooepidemicus (strain H70)).